The primary structure comprises 304 residues: Cyclin-dependent kinase 3 (304 aa).

Residues phenylalanine 4–phenylalanine 286 form the Protein kinase domain. ATP contacts are provided by residues isoleucine 10–valine 18 and lysine 33. Catalysis depends on aspartate 127, which acts as the Proton acceptor.

Belongs to the protein kinase superfamily. CMGC Ser/Thr protein kinase family. CDC2/CDKX subfamily. In terms of assembly, interacts with CABLES1 and ATF1. Binding to CCNC/cyclin-C promotes RB1 phosphorylation. Binds to CABLES2.

The catalysed reaction is L-seryl-[protein] + ATP = O-phospho-L-seryl-[protein] + ADP + H(+). It catalyses the reaction L-threonyl-[protein] + ATP = O-phospho-L-threonyl-[protein] + ADP + H(+). In terms of biological role, serine/threonine-protein kinase that plays a critical role in the control of the eukaryotic cell cycle; involved in G0-G1 and G1-S cell cycle transitions. Interacts with CCNC/cyclin-C during interphase. Phosphorylates histone H1, ATF1, RB1 and CABLES1. ATF1 phosphorylation triggers ATF1 transactivation and transcriptional activities, and promotes cell proliferation and transformation. CDK3/cyclin-C mediated RB1 phosphorylation is required for G0-G1 transition. Promotes G1-S transition probably by contributing to the activation of E2F1, E2F2 and E2F3 in a RB1-independent manner. This chain is Cyclin-dependent kinase 3 (Cdk3), found in Mus musculus (Mouse).